The primary structure comprises 556 residues: Formate--tetrahydrofolate ligase (556 aa).

Residue 65 to 72 (TPAGEGKS) participates in ATP binding.

The protein belongs to the formate--tetrahydrofolate ligase family.

The enzyme catalyses (6S)-5,6,7,8-tetrahydrofolate + formate + ATP = (6R)-10-formyltetrahydrofolate + ADP + phosphate. Its pathway is one-carbon metabolism; tetrahydrofolate interconversion. The sequence is that of Formate--tetrahydrofolate ligase from Streptococcus agalactiae serotype III (strain NEM316).